We begin with the raw amino-acid sequence, 151 residues long: Small ribosomal subunit protein uS11 (151 aa).

This sequence belongs to the universal ribosomal protein uS11 family.

The sequence is that of Small ribosomal subunit protein uS11 (RPS14) from Podocoryna carnea (Hydrozoan).